The primary structure comprises 227 residues: MSSPWYTWTCCGINLFGRGNHAYKRLGDPLEGCPERWRQEIDLGLPPGVCLGDVVQSNLGTTALHQTYLLAVQSNKITDYLKRFDVAKIPAGCQETVKTQVKKLQSIQNVVWNTMLALAVGEITVDDSALQSLLNKRAGECVSLMEMEKLATAMASDDSVIWASEISHSLSEPTSVLPLTPAVTRQPEATLPKPPTEDPSVSAMHSSIPPRPSSTLEETTESAIGST.

Residue C11 is the site of S-palmitoyl cysteine; by host attachment. The disordered stretch occupies residues 183 to 227; that stretch reads VTRQPEATLPKPPTEDPSVSAMHSSIPPRPSSTLEETTESAIGST. Polar residues predominate over residues 213–227; sequence SSTLEETTESAIGST.

This sequence belongs to the herpesviridae UL51 family. As to quaternary structure, oligomerizes. Interacts with ORF42; this interaction mediates ORF42 incorporation to virions. Interacts with vBCL2. In terms of processing, phosphorylated. Palmitoylation is necessary for Golgi localization.

Its subcellular location is the virion tegument. The protein localises to the host cytoplasm. It is found in the host Golgi apparatus. In terms of biological role, plays several roles during the time course of infection, including egress of virus particles from the perinuclear space and secondary envelopment of cytoplasmic capsids that bud into specific trans-Golgi network (TGN)-derived membranes. The chain is Tegument protein ORF55 (ORF55) from Homo sapiens (Human).